We begin with the raw amino-acid sequence, 293 residues long: Protease HtpX (293 aa).

A run of 2 helical transmembrane segments spans residues isoleucine 4–leucine 24 and glycine 34–serine 54. Zn(2+) is bound at residue histidine 139. Glutamate 140 is a catalytic residue. Zn(2+) is bound at residue histidine 143. A run of 2 helical transmembrane segments spans residues valine 158–methionine 178 and leucine 193–isoleucine 213. Glutamate 222 provides a ligand contact to Zn(2+).

The protein belongs to the peptidase M48B family. Zn(2+) serves as cofactor.

The protein localises to the cell inner membrane. The protein is Protease HtpX of Enterobacter sp. (strain 638).